Reading from the N-terminus, the 463-residue chain is Bifunctional protein HldE (463 aa).

The tract at residues Met-1 to Ile-315 is ribokinase. Asn-191–Glu-194 provides a ligand contact to ATP. Asp-260 is an active-site residue. A cytidylyltransferase region spans residues Phe-334 to Asp-463.

The protein in the N-terminal section; belongs to the carbohydrate kinase PfkB family. This sequence in the C-terminal section; belongs to the cytidylyltransferase family. In terms of assembly, homodimer.

It catalyses the reaction D-glycero-beta-D-manno-heptose 7-phosphate + ATP = D-glycero-beta-D-manno-heptose 1,7-bisphosphate + ADP + H(+). The catalysed reaction is D-glycero-beta-D-manno-heptose 1-phosphate + ATP + H(+) = ADP-D-glycero-beta-D-manno-heptose + diphosphate. Its pathway is nucleotide-sugar biosynthesis; ADP-L-glycero-beta-D-manno-heptose biosynthesis; ADP-L-glycero-beta-D-manno-heptose from D-glycero-beta-D-manno-heptose 7-phosphate: step 1/4. It functions in the pathway nucleotide-sugar biosynthesis; ADP-L-glycero-beta-D-manno-heptose biosynthesis; ADP-L-glycero-beta-D-manno-heptose from D-glycero-beta-D-manno-heptose 7-phosphate: step 3/4. It participates in bacterial outer membrane biogenesis; LPS core biosynthesis. Functionally, catalyzes the phosphorylation of D-glycero-D-manno-heptose 7-phosphate at the C-1 position to selectively form D-glycero-beta-D-manno-heptose-1,7-bisphosphate. Catalyzes the ADP transfer from ATP to D-glycero-beta-D-manno-heptose 1-phosphate, yielding ADP-D-glycero-beta-D-manno-heptose. The protein is Bifunctional protein HldE of Helicobacter pylori (strain J99 / ATCC 700824) (Campylobacter pylori J99).